The primary structure comprises 104 residues: N(4)-acetylcytidine amidohydrolase (104 aa).

One can recognise an ASCH domain in the interval 6–94 (ITFFQRFQND…IAEIYPNQTQ (89 aa)). K21 serves as the catalytic Proton acceptor. The active-site Nucleophile is T24. E74 serves as the catalytic Proton donor.

The protein belongs to the N(4)-acetylcytidine amidohydrolase family.

The catalysed reaction is N(4)-acetylcytidine + H2O = cytidine + acetate + H(+). The enzyme catalyses N(4)-acetyl-2'-deoxycytidine + H2O = 2'-deoxycytidine + acetate + H(+). It carries out the reaction N(4)-acetylcytosine + H2O = cytosine + acetate + H(+). Functionally, catalyzes the hydrolysis of N(4)-acetylcytidine (ac4C). This chain is N(4)-acetylcytidine amidohydrolase (yqfB), found in Salmonella agona (strain SL483).